A 361-amino-acid chain; its full sequence is sn-glycerol-3-phosphate import ATP-binding protein UgpC (361 aa).

Residues 4 to 235 (LSLKGIRKSY…PETVFVAGFI (232 aa)) enclose the ABC transporter domain. An ATP-binding site is contributed by 37-44 (GPSGCGKS).

The protein belongs to the ABC transporter superfamily. sn-glycerol-3-phosphate importer (TC 3.A.1.1.3) family. In terms of assembly, the complex is composed of two ATP-binding proteins (UgpC), two transmembrane proteins (UgpA and UgpE) and a solute-binding protein (UgpB).

It localises to the cell inner membrane. The enzyme catalyses sn-glycerol 3-phosphate(out) + ATP + H2O = sn-glycerol 3-phosphate(in) + ADP + phosphate + H(+). Functionally, part of the ABC transporter complex UgpBAEC involved in sn-glycerol-3-phosphate (G3P) import. Responsible for energy coupling to the transport system. This is sn-glycerol-3-phosphate import ATP-binding protein UgpC from Burkholderia ambifaria (strain ATCC BAA-244 / DSM 16087 / CCUG 44356 / LMG 19182 / AMMD) (Burkholderia cepacia (strain AMMD)).